Here is a 465-residue protein sequence, read N- to C-terminus: CUGBP Elav-like family member 3 (465 aa).

RRM domains follow at residues 7–88 and 95–175; these read IKLF…PADS and RKLF…FADT. The span at 346-359 shows a compositional bias: pro residues; it reads PPALVAQQPPPPPQ. The tract at residues 346-379 is disordered; the sequence is PPALVAQQPPPPPQQQQQQQQQQQQQQQREGPDG. Over residues 360 to 373 the composition is skewed to low complexity; the sequence is QQQQQQQQQQQQQQ. The 79-residue stretch at 380–458 folds into the RRM 3 domain; sequence CNIFIYHLPQ…KRLKVQLKRP (79 aa).

It belongs to the CELF/BRUNOL family. Expressed in brain.

It is found in the nucleus. Its subcellular location is the cytoplasm. Functionally, RNA-binding protein involved in the regulation of pre-mRNA alternative splicing. Mediates exon inclusion and/or exclusion in pre-mRNA that are subject to tissue-specific and developmentally regulated alternative splicing. Specifically activates exon 5 inclusion of cardiac isoforms of TNNT2 during heart remodeling at the juvenile to adult transition. Activates the splicing of MAPT/Tau exon 10. Binds to muscle-specific splicing enhancer (MSE) intronic sites flanking the alternative exon 5 of TNNT2 pre-mRNA. This Homo sapiens (Human) protein is CUGBP Elav-like family member 3 (CELF3).